A 276-amino-acid chain; its full sequence is NADPH-dependent 7-cyano-7-deazaguanine reductase (276 aa).

83-85 lines the substrate pocket; that stretch reads IES. 85-86 contacts NADPH; the sequence is SK. Cys184 functions as the Thioimide intermediate in the catalytic mechanism. Asp191 functions as the Proton donor in the catalytic mechanism. 223–224 is a binding site for substrate; it reads HE. 252-253 is a binding site for NADPH; that stretch reads RG.

The protein belongs to the GTP cyclohydrolase I family. QueF type 2 subfamily. In terms of assembly, homodimer.

It is found in the cytoplasm. The catalysed reaction is 7-aminomethyl-7-carbaguanine + 2 NADP(+) = 7-cyano-7-deazaguanine + 2 NADPH + 3 H(+). The protein operates within tRNA modification; tRNA-queuosine biosynthesis. Catalyzes the NADPH-dependent reduction of 7-cyano-7-deazaguanine (preQ0) to 7-aminomethyl-7-deazaguanine (preQ1). The polypeptide is NADPH-dependent 7-cyano-7-deazaguanine reductase (Pseudomonas entomophila (strain L48)).